The sequence spans 154 residues: Xanthine-guanine phosphoribosyltransferase (154 aa).

5-phospho-alpha-D-ribose 1-diphosphate-binding positions include 37-38 (RG), Arg-69, and 88-96 (DDLVDSGDT). Arg-69 provides a ligand contact to GMP. Asp-89 is a binding site for Mg(2+). 2 residues coordinate guanine: Asp-92 and Ile-135. Xanthine-binding residues include Asp-92 and Ile-135. Residues 92 to 96 (DSGDT) and 134 to 135 (WI) each bind GMP.

This sequence belongs to the purine/pyrimidine phosphoribosyltransferase family. XGPT subfamily. Homotetramer. Mg(2+) serves as cofactor.

The protein localises to the cell inner membrane. The catalysed reaction is GMP + diphosphate = guanine + 5-phospho-alpha-D-ribose 1-diphosphate. The enzyme catalyses XMP + diphosphate = xanthine + 5-phospho-alpha-D-ribose 1-diphosphate. It catalyses the reaction IMP + diphosphate = hypoxanthine + 5-phospho-alpha-D-ribose 1-diphosphate. It functions in the pathway purine metabolism; GMP biosynthesis via salvage pathway; GMP from guanine: step 1/1. Its pathway is purine metabolism; XMP biosynthesis via salvage pathway; XMP from xanthine: step 1/1. Its function is as follows. Purine salvage pathway enzyme that catalyzes the transfer of the ribosyl-5-phosphate group from 5-phospho-alpha-D-ribose 1-diphosphate (PRPP) to the N9 position of the 6-oxopurines guanine and xanthine to form the corresponding ribonucleotides GMP (guanosine 5'-monophosphate) and XMP (xanthosine 5'-monophosphate), with the release of PPi. To a lesser extent, also acts on hypoxanthine. This Vibrio cholerae serotype O1 (strain ATCC 39541 / Classical Ogawa 395 / O395) protein is Xanthine-guanine phosphoribosyltransferase.